Here is a 296-residue protein sequence, read N- to C-terminus: 4-hydroxy-tetrahydrodipicolinate synthase (296 aa).

Thr49 provides a ligand contact to pyruvate. Tyr137 serves as the catalytic Proton donor/acceptor. The active-site Schiff-base intermediate with substrate is Lys165. Ile208 contributes to the pyruvate binding site.

The protein belongs to the DapA family. Homotetramer; dimer of dimers.

It localises to the cytoplasm. The catalysed reaction is L-aspartate 4-semialdehyde + pyruvate = (2S,4S)-4-hydroxy-2,3,4,5-tetrahydrodipicolinate + H2O + H(+). Its pathway is amino-acid biosynthesis; L-lysine biosynthesis via DAP pathway; (S)-tetrahydrodipicolinate from L-aspartate: step 3/4. In terms of biological role, catalyzes the condensation of (S)-aspartate-beta-semialdehyde [(S)-ASA] and pyruvate to 4-hydroxy-tetrahydrodipicolinate (HTPA). The protein is 4-hydroxy-tetrahydrodipicolinate synthase of Ehrlichia canis (strain Jake).